A 321-amino-acid polypeptide reads, in one-letter code: Glucokinase (321 aa).

Glycine 8–threonine 13 contacts ATP.

This sequence belongs to the bacterial glucokinase family.

Its subcellular location is the cytoplasm. The catalysed reaction is D-glucose + ATP = D-glucose 6-phosphate + ADP + H(+). This chain is Glucokinase, found in Citrobacter koseri (strain ATCC BAA-895 / CDC 4225-83 / SGSC4696).